Reading from the N-terminus, the 220-residue chain is CASP-like protein 1E1 (220 aa).

At 1–57 the chain is on the cytoplasmic side; it reads METPTPRVKPGFNGVGVGMGSSVNGSSRRAGYYMGPAGAVAVAGGGRAAAAAPVDGC. A helical transmembrane segment spans residues 58-78; sequence SVALRVFVLAATLVSAVVMGV. At 79–108 the chain is on the extracellular side; that stretch reads DRQTSTIRITVTDALPPLEVPLTANWSYSS. The N-linked (GlcNAc...) asparagine glycan is linked to Asn-103. A helical membrane pass occupies residues 109–129; the sequence is AFVYFVVANAMVCLFSAAALA. Residues 130–144 lie on the Cytoplasmic side of the membrane; the sequence is ACRSRAAMVPVMVGD. The helical transmembrane segment at 145–165 threads the bilayer; sequence LLALALLYSAVGAAAEFGILG. Topologically, residues 166 to 187 are extracellular; it reads ERGNSHVRWPKVCNVYGRFCER. Residues 188 to 208 traverse the membrane as a helical segment; the sequence is AMAAVIVSLIAAFANLVLLML. Over 209–220 the chain is Cytoplasmic; the sequence is NILTIHKSSSYY.

It belongs to the Casparian strip membrane proteins (CASP) family. As to quaternary structure, homodimer and heterodimers.

The protein resides in the cell membrane. The protein is CASP-like protein 1E1 of Zea mays (Maize).